The sequence spans 121 residues: Large ribosomal subunit protein uL22 (121 aa).

This sequence belongs to the universal ribosomal protein uL22 family. Part of the 50S ribosomal subunit.

This protein binds specifically to 23S rRNA; its binding is stimulated by other ribosomal proteins, e.g. L4, L17, and L20. It is important during the early stages of 50S assembly. It makes multiple contacts with different domains of the 23S rRNA in the assembled 50S subunit and ribosome. Its function is as follows. The globular domain of the protein is located near the polypeptide exit tunnel on the outside of the subunit, while an extended beta-hairpin is found that lines the wall of the exit tunnel in the center of the 70S ribosome. The sequence is that of Large ribosomal subunit protein uL22 from Salinibacter ruber (strain DSM 13855 / M31).